The primary structure comprises 130 residues: MKKVNYFGTGRRKSAVARVILTNGTGKITINTRDFEKYLPLPATRLEMIQPLELTEKREAFDVSVNVNGGGLSAQAGAIRLGIARALIESVPELRAILKKAGLLTRDARCVERKKYGLKKARRAPQFSKR.

This sequence belongs to the universal ribosomal protein uS9 family.

In Onion yellows phytoplasma (strain OY-M), this protein is Small ribosomal subunit protein uS9.